A 38-amino-acid chain; its full sequence is Photosystem II reaction center protein Y (38 aa).

A helical transmembrane segment spans residues 5–23 (VVVVLAPVIIAGSWAIFNI).

The protein belongs to the PsbY family. In terms of assembly, PSII is composed of 1 copy each of membrane proteins PsbA, PsbB, PsbC, PsbD, PsbE, PsbF, PsbH, PsbI, PsbJ, PsbK, PsbL, PsbM, PsbT, PsbX, PsbY, PsbZ, Psb30/Ycf12, peripheral proteins PsbO, CyanoQ (PsbQ), PsbU, PsbV and a large number of cofactors. It forms dimeric complexes.

It is found in the cellular thylakoid membrane. Its function is as follows. Loosely associated component of the core of photosystem II (PSII), it is not always seen in crystals. PSII is a light-driven water plastoquinone oxidoreductase, using light energy to abstract electrons from H(2)O, generating a proton gradient subsequently used for ATP formation. This is Photosystem II reaction center protein Y from Picosynechococcus sp. (strain ATCC 27264 / PCC 7002 / PR-6) (Agmenellum quadruplicatum).